Reading from the N-terminus, the 541-residue chain is MGNSKPLPTISCIIVSVLYFSFYCITPTSSSASIQDQFINCVKRNTHVSFPLEKTLFTPAKNVSLFNQVLESTAQNLQFLAKSMPKPGFIFRPIHQSQVQASIICSKKLGIHFRVRSGGHDFEALSYVSRIEKPFILLDLSKLKQINVDIESNSAWVQPGATLGELYYRIAEKSKIHGFPAGLCTSVGIGGYMTGGGYGTLMRKYGLAGDNVLDVKMVDANGKLLDRAAMGEDLFWAIRGGGGASFGIVLAWKIKLVPVPKTVTVFTVTKTLEQDARLKTISKWQQISSKIIEEIHIRVVLRAAGNDGNKTVTMTYLGQFLGEKGTLLKVMEKAFPELGLTQKDCTEMSWIEAALFHGGFPTGSPIEILLQLKSPLGKDYFKATSDFVKEPIPVIGLKGIFKRLIEGNTTFLNWTPYGGMMSKIPESAIPFPHRNGTLFKILYYANWLENDKTSSRKINWIKEIYNYMAPYVSSNPRQAYVNYRDLDFGQNKNNAKVNFIEAKIWGPKYFKGNFDRLVKIKTKVDPENFFRHEQSIPPMPY.

A signal peptide spans 1–32 (MGNSKPLPTISCIIVSVLYFSFYCITPTSSSA). A disulfide bond links C41 and C105. The N-linked (GlcNAc...) asparagine glycan is linked to N62. Positions 83–259 (SMPKPGFIFR…LAWKIKLVPV (177 aa)) constitute an FAD-binding PCMH-type domain. Positions 120–184 (HDFEALSYVS…KIHGFPAGLC (65 aa)) form a cross-link, 6-(S-cysteinyl)-8alpha-(pros-histidyl)-FAD (His-Cys). N-linked (GlcNAc...) asparagine glycosylation is found at N309, N408, and N435.

It belongs to the oxygen-dependent FAD-linked oxidoreductase family. It depends on FAD as a cofactor. The FAD cofactor is bound via a bicovalent 6-S-cysteinyl, 8alpha-N1-histidyl FAD linkage.

It is found in the secreted. Its subcellular location is the cell wall. The sequence is that of Berberine bridge enzyme-like 24 from Arabidopsis thaliana (Mouse-ear cress).